A 227-amino-acid chain; its full sequence is Bone marrow proteoglycan (227 aa).

Positions 1 to 16 (MKFPLLLALLVGGAFA) are cleaved as a signal peptide. A propeptide spans 17 to 110 (LHLSSEASDS…TSLMGDSGFK (94 aa)) (acidic). The segment at 21–105 (SEASDSKSPL…KEEDTTSLMG (85 aa)) is disordered. An O-linked (GalNAc...) serine glycan is attached at S24. The span at 34 to 46 (SLPREAEISRPEV) shows a compositional bias: basic and acidic residues. Residues 58 to 70 (LEEEEEEEEEEGS) show a composition bias toward acidic residues. S70 carries an O-linked (Xyl...) (chondroitin sulfate) serine glycan. The region spanning 128-227 (LVCRSCYRGT…GKRRPFICAY (100 aa)) is the C-type lectin domain. 2 disulfides stabilise this stretch: C130–C225 and C202–C217.

Nitrated.

It localises to the secreted. Functionally, cytotoxin and helminthotoxin. MBP also induces non-cytolytic histamine release from basophils. It is involved in antiparasitic defense mechanisms and immune hypersensitivity reactions. The chain is Bone marrow proteoglycan (Prg2) from Rattus norvegicus (Rat).